The primary structure comprises 142 residues: Hemoglobin subunit alpha-2 (142 aa).

A Globin domain is found at 2 to 142; sequence VLSPADKTNV…VSTVLTSKYR (141 aa). Histidine 59 is a binding site for O2. Position 88 (histidine 88) interacts with heme b.

This sequence belongs to the globin family. In terms of assembly, heterotetramer of two alpha chains and two beta chains. As to expression, red blood cells.

In terms of biological role, involved in oxygen transport from the lung to the various peripheral tissues. Its function is as follows. Hemopressin acts as an antagonist peptide of the cannabinoid receptor CNR1. Hemopressin-binding efficiently blocks cannabinoid receptor CNR1 and subsequent signaling. In Hylobates lar (Lar gibbon), this protein is Hemoglobin subunit alpha-2 (HBA2).